Reading from the N-terminus, the 241-residue chain is Glucosamine-6-phosphate deaminase (241 aa).

Residue Asp-67 is the Proton acceptor; for enolization step of the active site. The active-site For ring-opening step is Asn-136. The Proton acceptor; for ring-opening step role is filled by His-138. Glu-143 (for ring-opening step) is an active-site residue.

This sequence belongs to the glucosamine/galactosamine-6-phosphate isomerase family. NagB subfamily.

It catalyses the reaction alpha-D-glucosamine 6-phosphate + H2O = beta-D-fructose 6-phosphate + NH4(+). The protein operates within amino-sugar metabolism; N-acetylneuraminate degradation; D-fructose 6-phosphate from N-acetylneuraminate: step 5/5. In terms of biological role, catalyzes the reversible isomerization-deamination of glucosamine 6-phosphate (GlcN6P) to form fructose 6-phosphate (Fru6P) and ammonium ion. The sequence is that of Glucosamine-6-phosphate deaminase from Alkaliphilus oremlandii (strain OhILAs) (Clostridium oremlandii (strain OhILAs)).